The primary structure comprises 352 residues: MIDKIVFEEDEEYDLTQDSFRYGRVTTGASYNLVTGKIPETVLEQVKAKDDENDDVEFEMDHLEDKEAVQKTKTFDELYESQMPKYFEYQSNFSEVNGIWTLLFDQNHYENMSTFELQAAICAALNSKHYMMICVGIDAFNAVTGVEMSAKDRVVFRMALTRAVAGEFQPPLVKVAPKQLTGVSPMKRDISEVTSSIDVLFIPVIGVTDEVENNRFLIVVRVKEISDKVYQISSGRIYNELEGRVVEMSDMNEAFHKLIVEQSISDIQTRRGSMFMLEPEPFLEDSPVIFTGSKEILRENHEIPNILKENSTERSLSQSLLNLLDIQNIGWIFFGTALSCCIYNNAIKPLVK.

The tract at residues 87–235 (FEYQSNFSEV…SDKVYQISSG (149 aa)) is SLFN-like fold. Residues 326–343 (IQNIGWIFFGTALSCCIY) form a helical membrane-spanning segment.

Belongs to the Schlafen family. Component of the PUCH (precursor of 21U RNA 5'-end cleavage holoenzyme) complex; consisting of tofu-1, tofu-2 and either slfl-3 or slfl-4.

The protein resides in the membrane. Functionally, component of the trimeric PUCH (precursor of 21U RNA 5'-end cleavage holoenzyme) complex, that acts as an endoribonuclease processing the 5'-end of precursor Piwi-interacting RNAs (piRNAs). The PUCH complex consists of tofu-1, tofu-2 and either slfl-3 or slfl-4, where tofu-2 exhibits endoribonuclease activity. PUCH-mediated processing strictly requires a 7-methyl-G cap (m7 G-cap) and an uracil at position three (U3). PUCH also exhibits a strict bias for piRNA precursors with an A or G at position 1. Mature piRNA production is enhanced by the interaction of PUCH with the PETISCO complex, which is stabilizing piRNA precursors and allows their processing by PUCH. This Caenorhabditis elegans protein is Schlafen-like protein 4.